Consider the following 177-residue polypeptide: Large ribosomal subunit protein uL6 (177 aa).

This sequence belongs to the universal ribosomal protein uL6 family. In terms of assembly, part of the 50S ribosomal subunit.

Its function is as follows. This protein binds to the 23S rRNA, and is important in its secondary structure. It is located near the subunit interface in the base of the L7/L12 stalk, and near the tRNA binding site of the peptidyltransferase center. The chain is Large ribosomal subunit protein uL6 from Rhodopseudomonas palustris (strain BisB18).